A 419-amino-acid polypeptide reads, in one-letter code: uncharacterized protein (419 aa).

Transmembrane regions (helical) follow at residues 15 to 35, 36 to 56, 77 to 99, 104 to 126, 140 to 160, 166 to 186, 213 to 233, 246 to 266, 282 to 302, 309 to 329, 351 to 371, and 377 to 397; these read RVLMINQFGINIGFYMLMPYL, ADYLAGPLGLAAWAVGLVMGV, YKPLIIAGCLIRTGGFALLVVAQ, VLIAAAATGFAGALFNPAVRGYL, MFNVFYQSGILLGPLVGLVLL, ITVLAAAGVFGLLTVAQLVAL, FLTLAAAMTGCYALSFQIYLA, QYLLIAAMFAVSGLVAVGGQL, LVVGATILAASFIPVAVIPNG, VAVMALVLSASLLAVASAALF, FYSTIVGVGVLVGNLAIGSLM, and LNTDEIVWGGLILVGIVAVAG.

It belongs to the major facilitator superfamily.

The protein localises to the cell membrane. This is an uncharacterized protein from Mycobacterium tuberculosis (strain CDC 1551 / Oshkosh).